The sequence spans 357 residues: 3-dehydroquinate synthase (357 aa).

Residues 104–108 (GVVGD), 128–129 (TT), Lys-141, and 168–171 (FLET) each bind NAD(+). Glu-183, His-243, and His-260 together coordinate Zn(2+).

Belongs to the sugar phosphate cyclases superfamily. Dehydroquinate synthase family. It depends on NAD(+) as a cofactor. The cofactor is Co(2+). Zn(2+) serves as cofactor.

It is found in the cytoplasm. It carries out the reaction 7-phospho-2-dehydro-3-deoxy-D-arabino-heptonate = 3-dehydroquinate + phosphate. It participates in metabolic intermediate biosynthesis; chorismate biosynthesis; chorismate from D-erythrose 4-phosphate and phosphoenolpyruvate: step 2/7. Its function is as follows. Catalyzes the conversion of 3-deoxy-D-arabino-heptulosonate 7-phosphate (DAHP) to dehydroquinate (DHQ). The polypeptide is 3-dehydroquinate synthase (Streptococcus pyogenes serotype M3 (strain ATCC BAA-595 / MGAS315)).